The sequence spans 339 residues: Fructose-1,6-bisphosphatase, cytosolic (339 aa).

Mg(2+) is bound by residues E70, E99, D120, L122, and D123. Residues 123–126, N214, Y246, Y266, and K276 each bind substrate; that span reads DGSS. E282 is a Mg(2+) binding site.

Belongs to the FBPase class 1 family. Mg(2+) serves as cofactor.

Its subcellular location is the cytoplasm. The catalysed reaction is beta-D-fructose 1,6-bisphosphate + H2O = beta-D-fructose 6-phosphate + phosphate. The sequence is that of Fructose-1,6-bisphosphatase, cytosolic from Brassica napus (Rape).